The following is a 211-amino-acid chain: uncharacterized protein (211 aa).

His-54, His-56, Asp-58, His-59, His-129, Asp-148, and His-189 together coordinate Zn(2+).

The protein belongs to the metallo-beta-lactamase superfamily. Glyoxalase II family. Requires Zn(2+) as cofactor.

This is an uncharacterized protein from Aquifex aeolicus (strain VF5).